The following is a 227-amino-acid chain: Protein FAM3C (227 aa).

Positions 1–24 (MRVAGAAKLVVAVAVFLLTFYVIS) are cleaved as a signal peptide. Disulfide bonds link C58/C86 and C64/C221. A GG-type lectin domain is found at 67-225 (KHFAFKMASG…VEMEGCIPQK (159 aa)).

It belongs to the FAM3 family.

It is found in the secreted. It localises to the cytoplasmic vesicle. In terms of biological role, may be involved in retinal laminar formation. Promotes epithelial to mesenchymal transition. This chain is Protein FAM3C (Fam3c), found in Rattus norvegicus (Rat).